Reading from the N-terminus, the 307-residue chain is Streptomycin 6-kinase (307 aa).

133-145 is a streptomycin binding site; that stretch reads LAGLLARLVSVPA. The Proton acceptor role is filled by Asp201.

This sequence belongs to the aminoglycoside phosphotransferase family.

It carries out the reaction streptomycin + ATP = streptomycin 6-phosphate + ADP + H(+). Its function is as follows. The aminoglycoside phosphotransferases achieve inactivation of their antibiotic substrates by phosphorylation. The chain is Streptomycin 6-kinase (sph) from Streptomyces glaucescens.